Reading from the N-terminus, the 629-residue chain is Serine/threonine-protein kinase ICK (629 aa).

The 281-residue stretch at 4–284 folds into the Protein kinase domain; that stretch reads YTTIKQLGDG…ASQALRYPYF (281 aa). ATP is bound by residues 10–18 and Lys33; that span reads LGDGTYGSV. Asp125 serves as the catalytic Proton acceptor. Position 157 is a phosphothreonine; by CDK7 (Thr157). Phosphotyrosine is present on Tyr159. Phosphoserine is present on Ser161. 3 disordered regions span residues 292-376, 455-483, and 581-629; these read IISK…SLHN, SESV…SSAK, and SSLK…PSRR. A compositionally biased stretch (basic and acidic residues) spans 296-306; sequence DSGKPQREVQD. The span at 309–321 shows a compositional bias: pro residues; it reads GPPPYIKPAPPAQ. Composition is skewed to low complexity over residues 322-344 and 457-470; these read APAK…PQHS and SVGT…QASS.

It belongs to the protein kinase superfamily. CMGC Ser/Thr protein kinase family. CDC2/CDKX subfamily. The cofactor is Mg(2+). Autophosphorylated on serine and threonine residues. Phosphorylation at Thr-157 by CDK7/Cak1p increases kinase activity. Highly expressed in colon and lung, lower levels present in heart, esophagus, stomach, small intestine and ovary. Localizes to the crypt region of large and small intestine.

The protein resides in the cytoplasm. It localises to the cytosol. It is found in the cell projection. The protein localises to the cilium. Its subcellular location is the nucleus. The protein resides in the cytoskeleton. It localises to the cilium basal body. The catalysed reaction is L-seryl-[protein] + ATP = O-phospho-L-seryl-[protein] + ADP + H(+). It catalyses the reaction L-threonyl-[protein] + ATP = O-phospho-L-threonyl-[protein] + ADP + H(+). In terms of biological role, has an essential role in ciliogenesis, particularly in neuronal and retinal progenitor cells. Phosphorylates KIF3A. Involved in the control of ciliary length. Regulates the ciliary localization of SHH pathway components as well as the localization of IFT components at ciliary tips. May play a role in cardiac development. Regulates intraflagellar transport (IFT) speed and negatively regulates cilium length in a cAMP and mTORC1 signaling -dependent manner and this regulation requires its kinase activity. In Mus musculus (Mouse), this protein is Serine/threonine-protein kinase ICK (Cilk1).